A 388-amino-acid chain; its full sequence is bZIP transcription factor ABI5 homolog (388 aa).

The disordered stretch occupies residues 1–36; sequence MASEMSKNVKVTDDQEVTSQERDQSGGTKVGGEEEI. Residue Ser-44 is modified to Phosphoserine. In terms of domain architecture, bZIP spans 302-365; the sequence is VERRQRRMIK…KQMLVEKMME (64 aa). The basic motif stretch occupies residues 304–323; sequence RRQRRMIKNRESAARSRARK. The segment at 330 to 344 is leucine-zipper; sequence LEAELNYLKQENARL. A disordered region spans residues 368–388; that stretch reads KEKMNANRGGSQLRRSGSCMW.

This sequence belongs to the bZIP family. ABI5 subfamily. In terms of assembly, forms homodimers. Interacts with VP1. Interacts with GF14D. Interacts with PP2C51. Interacts with SAPK2. In terms of processing, phosphorylated at Ser-44 by SAPK6. As to expression, expressed in roots, leaves and panicles. Expressed in seeds.

The protein resides in the nucleus. In terms of biological role, transcription factor that possesses transactivation activity in yeast. Involved in abscisic acid (ABA) signaling pathway. Binds to the G-box motif 5'-CACGTG-3' of TRAB1 gene promoter. Involved in the regulation of pollen maturation. May act as negative regulator of salt stress response. Together with PYL5, PP2C30 and SAPK2, is part of an ABA signaling unit that modulates seed germination and early seedling growth. This Oryza sativa subsp. japonica (Rice) protein is bZIP transcription factor ABI5 homolog.